A 31-amino-acid polypeptide reads, in one-letter code: Cytochrome b6-f complex subunit 6 (31 aa).

A helical membrane pass occupies residues 3–23; that stretch reads TITSYFGFLLAALTITPALFI.

Belongs to the PetL family. The 4 large subunits of the cytochrome b6-f complex are cytochrome b6, subunit IV (17 kDa polypeptide, PetD), cytochrome f and the Rieske protein, while the 4 small subunits are PetG, PetL, PetM and PetN. The complex functions as a dimer.

It is found in the plastid. It localises to the chloroplast thylakoid membrane. Functionally, component of the cytochrome b6-f complex, which mediates electron transfer between photosystem II (PSII) and photosystem I (PSI), cyclic electron flow around PSI, and state transitions. PetL is important for photoautotrophic growth as well as for electron transfer efficiency and stability of the cytochrome b6-f complex. This Zea mays (Maize) protein is Cytochrome b6-f complex subunit 6.